We begin with the raw amino-acid sequence, 562 residues long: Arginine--tRNA ligase (562 aa).

The short motif at 129-139 (ANPTGPLHVGH) is the 'HIGH' region element.

Belongs to the class-I aminoacyl-tRNA synthetase family. In terms of assembly, monomer.

It localises to the cytoplasm. It catalyses the reaction tRNA(Arg) + L-arginine + ATP = L-arginyl-tRNA(Arg) + AMP + diphosphate. This Stenotrophomonas maltophilia (strain K279a) protein is Arginine--tRNA ligase.